The chain runs to 170 residues: Probable inosine/xanthosine triphosphatase (170 aa).

Position 31 (E31) interacts with Mg(2+).

Belongs to the YjjX NTPase family. Homodimer. Requires Mg(2+) as cofactor. The cofactor is Mn(2+).

The enzyme catalyses XTP + H2O = XDP + phosphate + H(+). It catalyses the reaction ITP + H2O = IDP + phosphate + H(+). Functionally, phosphatase that hydrolyzes non-canonical purine nucleotides such as XTP and ITP to their respective diphosphate derivatives. Probably excludes non-canonical purines from DNA/RNA precursor pool, thus preventing their incorporation into DNA/RNA and avoiding chromosomal lesions. The chain is Probable inosine/xanthosine triphosphatase from Oceanobacillus iheyensis (strain DSM 14371 / CIP 107618 / JCM 11309 / KCTC 3954 / HTE831).